A 289-amino-acid chain; its full sequence is Protein FraH (289 aa).

The segment at Cys4–Gly49 adopts a DZANK-type zinc-finger fold. Residues Cys18–Cys48 fold into a zinc finger. The FHA domain occupies Val204–Leu260.

Functionally, putative heterocyst to vegetative cell connection. The polypeptide is Protein FraH (fraH) (Nostoc sp. (strain PCC 7120 / SAG 25.82 / UTEX 2576)).